Consider the following 238-residue polypeptide: Citrate-binding protein (238 aa).

Residues 1 to 31 form the signal peptide; that stretch reads MKMKRSPYCFCCSFALLLLVSFLKDRHFCSA. Residues 225–238 constitute a propeptide, removed in mature form; that stretch reads LEGCNNNHGTWLVQ.

It is found in the vacuole. Functionally, may be a subunit of a vacuolar malate and citrate transporter. The chain is Citrate-binding protein (CBP) from Hevea brasiliensis (Para rubber tree).